A 147-amino-acid chain; its full sequence is Large ribosomal subunit protein uL16 (147 aa).

It belongs to the universal ribosomal protein uL16 family. As to quaternary structure, part of the 50S ribosomal subunit.

In terms of biological role, binds 23S rRNA and is also seen to make contacts with the A and possibly P site tRNAs. The protein is Large ribosomal subunit protein uL16 of Clostridium botulinum (strain ATCC 19397 / Type A).